The sequence spans 308 residues: ATP synthase gamma chain (308 aa).

It belongs to the ATPase gamma chain family. As to quaternary structure, F-type ATPases have 2 components, CF(1) - the catalytic core - and CF(0) - the membrane proton channel. CF(1) has five subunits: alpha(3), beta(3), gamma(1), delta(1), epsilon(1). CF(0) has three main subunits: a, b and c.

It is found in the cell inner membrane. Produces ATP from ADP in the presence of a proton gradient across the membrane. The gamma chain is believed to be important in regulating ATPase activity and the flow of protons through the CF(0) complex. This Salinibacter ruber (strain DSM 13855 / M31) protein is ATP synthase gamma chain.